The chain runs to 196 residues: Heat shock protein beta-8 (196 aa).

S24 and S57 each carry phosphoserine. A Phosphothreonine; by PKC; in vitro modification is found at T63. 2 positions are modified to asymmetric dimethylarginine: R71 and R78. A sHSP domain is found at 74–185 (TATARFGVPA…TFGESSFNNE (112 aa)). The disordered stretch occupies residues 176–196 (TFGESSFNNELPQDSQEVTCT). A compositionally biased stretch (polar residues) spans 177-196 (FGESSFNNELPQDSQEVTCT).

The protein belongs to the small heat shock protein (HSP20) family. Monomer. Forms a ternary complex with BAG3 and HSPA1A. Component of the chaperone-assisted selective autophagy (CASA) complex consisting of BAG3, HSPA8/HSC70, HSPB8 and STUB1/CHIP. Interacts with HSPB1. Interacts with DNAJB6. Interacts with BAG3. In terms of tissue distribution, predominantly expressed in skeletal muscle and heart.

Its subcellular location is the cytoplasm. The protein resides in the nucleus. Involved in the chaperone-assisted selective autophagy (CASA), a crucial process for protein quality control, particularly in mechanical strained cells and tissues such as muscle. Displays temperature-dependent chaperone activity. In Homo sapiens (Human), this protein is Heat shock protein beta-8 (HSPB8).